The sequence spans 276 residues: Protein TabB (276 aa).

It belongs to the transferase hexapeptide repeat family. The cofactor is pyridoxal 5'-phosphate.

The polypeptide is Protein TabB (tabB) (Pseudomonas amygdali pv. tabaci (Pseudomonas syringae pv. tabaci)).